A 477-amino-acid chain; its full sequence is E3 ubiquitin-protein ligase TRIM17 (477 aa).

Residues 16–66 (CSICLDYFTDPVMTACGHNFCRECIQMSWEKGKVKKGKKKQKGSFPCPECR) form an RING-type zinc finger. The B box-type zinc-finger motif lies at 94 to 135 (QKRDLCQAHQEPLKLFCQDDQSPICVVCREAQEHRMHRVLPL). The Zn(2+) site is built by C99, H102, C121, and H127. Residues 135–226 (LDEAAREYKL…KLQDSKASLD (92 aa)) are a coiled coil. A B30.2/SPRY domain is found at 276–475 (AIKTLCRVPG…MVISTVTMWV (200 aa)).

Belongs to the TRIM/RBCC family. As to quaternary structure, interacts (via coiled coil) with TRIM44 (via coiled coil). Interacts with TRIM28; this interaction prevents TRIM28 activity on BCL2A1. Interacts with TRIM41; this interaction prevents TRIM41 activity on ZSCAN2. Interacts with BECN1. Interacts with NFATC3 and NFATC4; these interactions prevent NFATC3 and NFATC4 nuclear localization. Post-translationally, auto-ubiquitinated. In terms of tissue distribution, almost exclusively in the testis.

It is found in the cytoplasm. It localises to the lysosome. It catalyses the reaction S-ubiquitinyl-[E2 ubiquitin-conjugating enzyme]-L-cysteine + [acceptor protein]-L-lysine = [E2 ubiquitin-conjugating enzyme]-L-cysteine + N(6)-ubiquitinyl-[acceptor protein]-L-lysine.. It participates in protein modification; protein ubiquitination. E3 ubiquitin ligase that plays important roles in the regulation of neuronal apoptosis, selective autophagy or cell proliferation. Stimulates the degradation of kinetochore ZW10 interacting protein ZWINT in a proteasome-dependent manner, leading to negative regulation of cell proliferation. Inhibits autophagic degradation of diverse known targets while contributing to autophagy of midbodies. Autophagy-inhibitory activity involves MCL1, which TRIM17 assembles into complexes with the key autophagy regulator BECN1. Controls neuronal apoptosis by mediating ubiquitination and degradation of MCL1 to initiate neuronal death. In addition, regulates NFAT transcription factors NFATC3 and NFATC4 activities by preventing their nuclear localization, thus inhibiting their transcriptional activities. Decreases TRIM41-mediated degradation of ZSCAN2 thereby stimulating alpha-synuclein/SNCA transcription in neuronal cells. Prevents the E3 ubiquitin-ligase activity of TRIM28 and its interaction with anti-apoptotic BCL2A1, blocking TRIM28 from ubiquitinating BCL2A1. The protein is E3 ubiquitin-protein ligase TRIM17 (Trim17) of Mus musculus (Mouse).